Here is a 1412-residue protein sequence, read N- to C-terminus: uncharacterized protein (1412 aa).

Residues 1–22 (MESINVVNSVEDLPGFNPDENV) are disordered. Coiled coils occupy residues 317–377 (NNDF…ILRH) and 732–800 (SKEA…SDDE). A disordered region spans residues 778–808 (SRKRKHEDIVKEHEAEKRDSDDEDDFEEVDV). Residues 783–797 (HEDIVKEHEAEKRDS) show a composition bias toward basic and acidic residues. The segment covering 798 to 808 (DDEDDFEEVDV) has biased composition (acidic residues).

This is an uncharacterized protein from Magallana gigas (Pacific oyster).